The primary structure comprises 586 residues: MVRFIFVTGGVVSSLGKGITAASLAMLLQAKGFRVSVRKLDPYLNVDPGTMNPHEHGEVYVTDDGAETDLDLGHYERFTGVTACKCDNITTGAIYSKLLKDERLGNYTGITVQVIPHVTNIIKDFIMSNTNGFDFIICEIGGTVGDIEGLPFFEAIRQIGNKLKNANCLFIHLTLLPYVKTARELKTKPTQHSVKELRAIGISPNILVCRAERNISKSAIDKIALFCNIKPEYVIPAIDQKNIYLVPIAYHNSGLENKVLNFFNINVVPSKLDKWYDIIDKIKDSNSKVKIAIITKYHKTQDAYKSVIEALNHAGIYYKYKIDVLWINAENLTEENINKKLLDINGILVPGGFGVRATQGKMIAIKYARTNNIPFFGICFGMQLATIEIAQNLIGIQDAVTEEFKIKGTKIIEKINKNCEDATIKIKNAHISKCTYSEAFECDASTVYTNIHEDSNNLSTDKLQIETNFRNMSDIEKTMRLGAYPCNLVANTIAANAYKSLEINERHRHRYKFNNEFQNIFEQHGVVFSGFSQNKQIVEIIELPELRWFVGVQFHPEFKSKPFEAHPLFIQFIKATIEYNKSNEQQ.

Residues 1–265 are amidoligase domain; it reads MVRFIFVTGG…ENKVLNFFNI (265 aa). Position 13 (S13) interacts with CTP. S13 lines the UTP pocket. ATP is bound by residues 14-19 and D71; that span reads SLGKGI. D71 and E139 together coordinate Mg(2+). Residues 146–148, 186–191, and K222 contribute to the CTP site; these read DIE and KTKPTQ. UTP is bound by residues 186-191 and K222; that span reads KTKPTQ. Residues 290–582 enclose the Glutamine amidotransferase type-1 domain; the sequence is KIAIITKYHK…IKATIEYNKS (293 aa). G352 lines the L-glutamine pocket. Catalysis depends on C379, which acts as the Nucleophile; for glutamine hydrolysis. Residues 380-383 and E403 contribute to the L-glutamine site; that span reads FGMQ. The RPE1 insert domain maps to 429-473; it reads AHISKCTYSEAFECDASTVYTNIHEDSNNLSTDKLQIETNFRNMS. Residue R510 coordinates L-glutamine. Residues H555 and E557 contribute to the active site.

The protein belongs to the CTP synthase family. In terms of assembly, homotetramer.

The enzyme catalyses UTP + L-glutamine + ATP + H2O = CTP + L-glutamate + ADP + phosphate + 2 H(+). It catalyses the reaction L-glutamine + H2O = L-glutamate + NH4(+). It carries out the reaction UTP + NH4(+) + ATP = CTP + ADP + phosphate + 2 H(+). It functions in the pathway pyrimidine metabolism; CTP biosynthesis via de novo pathway; CTP from UDP: step 2/2. Allosterically activated by GTP, when glutamine is the substrate; GTP has no effect on the reaction when ammonia is the substrate. The allosteric effector GTP functions by stabilizing the protein conformation that binds the tetrahedral intermediate(s) formed during glutamine hydrolysis. Inhibited by the product CTP, via allosteric rather than competitive inhibition. In terms of biological role, catalyzes the ATP-dependent amination of UTP to CTP with either L-glutamine or ammonia as the source of nitrogen. Regulates intracellular CTP levels through interactions with the four ribonucleotide triphosphates. This chain is CTP synthase, found in Rickettsia prowazekii (strain Madrid E).